The following is a 186-amino-acid chain: Threonylcarbamoyl-AMP synthase (186 aa).

A YrdC-like domain is found at 3–186; the sequence is ELTLDSAVAT…DALSGNVLRS (184 aa).

It belongs to the SUA5 family. TsaC subfamily.

The protein resides in the cytoplasm. The catalysed reaction is L-threonine + hydrogencarbonate + ATP = L-threonylcarbamoyladenylate + diphosphate + H2O. In terms of biological role, required for the formation of a threonylcarbamoyl group on adenosine at position 37 (t(6)A37) in tRNAs that read codons beginning with adenine. Catalyzes the conversion of L-threonine, HCO(3)(-)/CO(2) and ATP to give threonylcarbamoyl-AMP (TC-AMP) as the acyladenylate intermediate, with the release of diphosphate. The polypeptide is Threonylcarbamoyl-AMP synthase (Stenotrophomonas maltophilia (strain K279a)).